A 296-amino-acid chain; its full sequence is 33 kDa chaperonin (296 aa).

Disulfide bonds link Cys238-Cys240 and Cys271-Cys274.

Belongs to the HSP33 family. Post-translationally, under oxidizing conditions two disulfide bonds are formed involving the reactive cysteines. Under reducing conditions zinc is bound to the reactive cysteines and the protein is inactive.

It is found in the cytoplasm. Functionally, redox regulated molecular chaperone. Protects both thermally unfolding and oxidatively damaged proteins from irreversible aggregation. Plays an important role in the bacterial defense system toward oxidative stress. In Clostridium botulinum (strain 657 / Type Ba4), this protein is 33 kDa chaperonin.